The chain runs to 169 residues: Thiol peroxidase (169 aa).

In terms of domain architecture, Thioredoxin spans 19 to 167; it reads LKVGDRAPEA…YDEVVNKVKE (149 aa). The active-site Cysteine sulfenic acid (-SOH) intermediate is the cysteine 61. A disulfide bridge connects residues cysteine 61 and cysteine 95.

Belongs to the peroxiredoxin family. Tpx subfamily. In terms of assembly, homodimer.

It carries out the reaction a hydroperoxide + [thioredoxin]-dithiol = an alcohol + [thioredoxin]-disulfide + H2O. Its function is as follows. Thiol-specific peroxidase that catalyzes the reduction of hydrogen peroxide and organic hydroperoxides to water and alcohols, respectively. Plays a role in cell protection against oxidative stress by detoxifying peroxides. The chain is Thiol peroxidase from Aquifex aeolicus (strain VF5).